A 691-amino-acid chain; its full sequence is F-box/LRR-repeat protein 5 (691 aa).

The hemerythrin-like stretch occupies residues 1–159; that stretch reads MAPFPEEVDV…IKKKVIAQHC (159 aa). Histidine 15, histidine 57, glutamate 58, glutamate 61, histidine 80, histidine 126, and glutamate 130 together coordinate Fe(3+). An F-box domain is found at 202–248; that stretch reads STGITHLPPEVMLSIFSYLNPQELCRCSQVSMKWSQLTKTGSLWKHL. 7 LRR repeats span residues 340–364, 365–392, 393–418, 479–508, 576–607, 608–635, and 636–661; these read SSAVSSKMVRQILELCPNLEHLDLT, QTDISDSAFDSWSWLGCCQSLRHLDLSG, CEKITDVALEKISRALGILTSHQSGF, LWMLDAEDLADIEDTVEWRHRNVESLCVVE, TRLPRGKDLIYFGSEKSDQETGRVLLFLSLSG, CYQITDHGLRVLTLGGGLPYLEHLNLSG, and CLTITGAGLQDLVSACPSLNDEYFYY. Cysteine 662, cysteine 676, cysteine 686, and cysteine 687 together coordinate [2Fe-2S] cluster.

In terms of assembly, part of a SCF (SKP1-cullin-F-box) protein ligase complex. Interacts with ACO1/IRP1, IREB2/IRP2; the interaction depends on the [2Fe-2S] cluster. Interacts with DCTN1/p150-glued. [2Fe-2S] cluster serves as cofactor. Polybiquitinated upon iron and oxygen depletion, leading to its degradation by the proteasome. Ubiquitination is regulated by the hemerythrin-like region that acts as an oxygen and iron sensor. Undergoes constitutive ubiquitin-dependent degradation at the steady state by HERC2.

Its subcellular location is the cytoplasm. It is found in the perinuclear region. The protein localises to the nucleus. It functions in the pathway protein modification; protein ubiquitination. With respect to regulation, an iron-sulfur cluster promotes IRP2 polyubiquitination and degradation in response to both iron and oxygen concentrations. In terms of biological role, component of some SCF (SKP1-cullin-F-box) protein ligase complex that plays a central role in iron homeostasis by promoting the ubiquitination and subsequent degradation of IREB2/IRP2. The C-terminal domain of FBXL5 contains a redox-sensitive [2Fe-2S] cluster that, upon oxidation, promotes binding to IRP2 to effect its oxygen-dependent degradation. Under iron deficiency conditions, the N-terminal hemerythrin-like (Hr) region, which contains a diiron metal center, cannot bind iron and undergoes conformational changes that destabilize the FBXL5 protein and cause its ubiquitination and degradation. When intracellular iron levels start rising, the Hr region is stabilized. Additional increases in iron levels facilitate the assembly and incorporation of a redox active [2Fe-2S] cluster in the C-terminal domain. Only when oxygen level is high enough to maintain the cluster in its oxidized state can FBXL5 recruit IRP2 as a substrate for polyubiquination and degradation. Promotes ubiquitination and subsequent degradation of the dynactin complex component DCTN1. Within the nucleus, promotes the ubiquitination of SNAI1; preventing its interaction with DNA and promoting its degradation. Negatively regulates DNA damage response by mediating the ubiquitin-proteasome degradation of the DNA repair protein NABP2. This is F-box/LRR-repeat protein 5 (FBXL5) from Pongo abelii (Sumatran orangutan).